The sequence spans 121 residues: Phosphoribosyl-ATP pyrophosphatase (121 aa).

This sequence belongs to the PRA-PH family.

The protein localises to the cytoplasm. The enzyme catalyses 1-(5-phospho-beta-D-ribosyl)-ATP + H2O = 1-(5-phospho-beta-D-ribosyl)-5'-AMP + diphosphate + H(+). It functions in the pathway amino-acid biosynthesis; L-histidine biosynthesis; L-histidine from 5-phospho-alpha-D-ribose 1-diphosphate: step 2/9. The sequence is that of Phosphoribosyl-ATP pyrophosphatase from Burkholderia cenocepacia (strain ATCC BAA-245 / DSM 16553 / LMG 16656 / NCTC 13227 / J2315 / CF5610) (Burkholderia cepacia (strain J2315)).